The primary structure comprises 274 residues: Cytochrome b-c1 complex subunit Rieske, mitochondrial (274 aa).

Over 79-103 (SHTDIKVPDFSDYRRAEVLDSTKSS) the chain is Mitochondrial matrix. Residues 104–140 (KESSEARKGFSYLVTATTTVGVAYAAKNAVSQFVSSM) traverse the membrane as a helical segment. The Mitochondrial intermembrane segment spans residues 141–274 (SASADVLAMS…FTSGDVVVVG (134 aa)). The Rieske domain maps to 187-272 (EAAVEVSQLR…YEFTSGDVVV (86 aa)). Residues C217, H219, C236, H239, and S241 each contribute to the [2Fe-2S] cluster site. Residues C222 and C238 are joined by a disulfide bond.

Belongs to the Rieske iron-sulfur protein family. In terms of assembly, component of the ubiquinol-cytochrome c oxidoreductase (cytochrome b-c1 complex, complex III, CIII), a multisubunit enzyme composed of 11 subunits. The complex is composed of 3 respiratory subunits cytochrome b, cytochrome c1 and Rieske protein UQCRFS1, 2 core protein subunits UQCRC1/QCR1 and UQCRC2/QCR2, and 6 low-molecular weight protein subunits UQCRH/QCR6, UQCRB/QCR7, UQCRQ/QCR8, UQCR10/QCR9, UQCR11/QCR10 and subunit 9, the cleavage product of Rieske protein UQCRFS1. The complex exists as an obligatory dimer and forms supercomplexes (SCs) in the inner mitochondrial membrane with NADH-ubiquinone oxidoreductase (complex I, CI) and cytochrome c oxidase (complex IV, CIV), resulting in different assemblies (supercomplex SCI(1)III(2)IV(1) and megacomplex MCI(2)III(2)IV(2)). Incorporation of the Rieske protein UQCRFS1 is the penultimate step in complex III assembly. Interacts with TTC19, which is involved in the clearance of UQCRFS1 fragments. Component of the ubiquinol-cytochrome c oxidoreductase (cytochrome b-c1 complex, complex III, CIII). Subunit 9 corresponds to the mitochondrial targeting sequence (MTS) of Rieske protein UQCRFS1. It is retained after processing and incorporated inside complex III, where it remains bound to the complex and localizes between the 2 core subunits UQCRC1/QCR1 and UQCRC2/QCR2. It depends on [2Fe-2S] cluster as a cofactor. In terms of processing, proteolytic processing is necessary for the correct insertion of UQCRFS1 in the complex III dimer. Several fragments are generated during UQCRFS1 insertion, most probably due to the endogenous matrix-processing peptidase (MPP) activity of the 2 core protein subunits UQCRC1/QCR1 and UQCRC2/QCR2, which are homologous to the 2 mitochondrial-processing peptidase (MPP) subunits beta-MPP and alpha-MPP respectively. The action of the protease is also necessary for the clearance of the UQCRFS1 fragments.

The protein resides in the mitochondrion inner membrane. The enzyme catalyses a quinol + 2 Fe(III)-[cytochrome c](out) = a quinone + 2 Fe(II)-[cytochrome c](out) + 2 H(+)(out). Functionally, component of the ubiquinol-cytochrome c oxidoreductase, a multisubunit transmembrane complex that is part of the mitochondrial electron transport chain which drives oxidative phosphorylation. The respiratory chain contains 3 multisubunit complexes succinate dehydrogenase (complex II, CII), ubiquinol-cytochrome c oxidoreductase (cytochrome b-c1 complex, complex III, CIII) and cytochrome c oxidase (complex IV, CIV), that cooperate to transfer electrons derived from NADH and succinate to molecular oxygen, creating an electrochemical gradient over the inner membrane that drives transmembrane transport and the ATP synthase. The cytochrome b-c1 complex catalyzes electron transfer from ubiquinol to cytochrome c, linking this redox reaction to translocation of protons across the mitochondrial inner membrane, with protons being carried across the membrane as hydrogens on the quinol. In the process called Q cycle, 2 protons are consumed from the matrix, 4 protons are released into the intermembrane space and 2 electrons are passed to cytochrome c. The Rieske protein is a catalytic core subunit containing a [2Fe-2S] iron-sulfur cluster. It cycles between 2 conformational states during catalysis to transfer electrons from the quinol bound in the Q(0) site in cytochrome b to cytochrome c1. Incorporation of UQCRFS1 is the penultimate step in complex III assembly. Component of the ubiquinol-cytochrome c oxidoreductase (cytochrome b-c1 complex, complex III, CIII). UQCRFS1 undergoes proteolytic processing once it is incorporated in the complex III dimer. One of the fragments, called subunit 9, corresponds to its mitochondrial targeting sequence (MTS). The proteolytic processing is necessary for the correct insertion of UQCRFS1 in the complex III dimer, but the persistence of UQCRFS1-derived fragments may prevent newly imported UQCRFS1 to be processed and assembled into complex III and is detrimental for the complex III structure and function. The polypeptide is Cytochrome b-c1 complex subunit Rieske, mitochondrial (Uqcrfs1) (Rattus norvegicus (Rat)).